Reading from the N-terminus, the 671-residue chain is DNA ligase (671 aa).

NAD(+) contacts are provided by residues 32–36 (DAEYD), 81–82 (SL), and E113. K115 (N6-AMP-lysine intermediate) is an active-site residue. NAD(+) contacts are provided by R136, E173, K290, and K314. C408, C411, C426, and C432 together coordinate Zn(2+). The region spanning 593 to 671 (EIDSPFAGKT…EAEMMRLLGE (79 aa)) is the BRCT domain.

This sequence belongs to the NAD-dependent DNA ligase family. LigA subfamily. It depends on Mg(2+) as a cofactor. Requires Mn(2+) as cofactor.

It catalyses the reaction NAD(+) + (deoxyribonucleotide)n-3'-hydroxyl + 5'-phospho-(deoxyribonucleotide)m = (deoxyribonucleotide)n+m + AMP + beta-nicotinamide D-nucleotide.. Its function is as follows. DNA ligase that catalyzes the formation of phosphodiester linkages between 5'-phosphoryl and 3'-hydroxyl groups in double-stranded DNA using NAD as a coenzyme and as the energy source for the reaction. It is essential for DNA replication and repair of damaged DNA. The protein is DNA ligase of Klebsiella pneumoniae subsp. pneumoniae (strain ATCC 700721 / MGH 78578).